Here is a 621-residue protein sequence, read N- to C-terminus: KIF-binding protein (621 aa).

A disordered region spans residues 51 to 75 (GPAPEDEDERPEAEDGPGAGDHALG). Residues 54 to 65 (PEDEDERPEAED) are compositionally biased toward acidic residues. Position 178 is a phosphoserine (Ser178).

This sequence belongs to the KIF-binding protein family. As to quaternary structure, interacts with KIF1B; positively regulates KIF1B microtubule motor activity. Interacts with STMN2. Highly expressed in heart, brain, ovary, testis, spinal cord and all specific brain regions examined. Moderate expressed at intermediate level in all other adult tissues examined, as well as in fetal liver and brain. Not expressed in blood leukocytes.

Its subcellular location is the cytoplasm. It localises to the cytoskeleton. Its function is as follows. Activator of KIF1B plus-end-directed microtubule motor activity. Required for organization of axonal microtubules, and axonal outgrowth and maintenance during peripheral and central nervous system development. This is KIF-binding protein from Homo sapiens (Human).